A 257-amino-acid polypeptide reads, in one-letter code: UPF0246 protein Mmc1_3117 (257 aa).

The protein belongs to the UPF0246 family.

This Magnetococcus marinus (strain ATCC BAA-1437 / JCM 17883 / MC-1) protein is UPF0246 protein Mmc1_3117.